The primary structure comprises 297 residues: N-acetylmuramic acid 6-phosphate etherase (297 aa).

The region spanning 56–219 (AIEAFNKGGR…STISMIGIGK (164 aa)) is the SIS domain. Residue Glu-84 is the Proton donor of the active site. Residue Glu-115 is part of the active site.

Belongs to the GCKR-like family. MurNAc-6-P etherase subfamily. Homodimer.

The enzyme catalyses N-acetyl-D-muramate 6-phosphate + H2O = N-acetyl-D-glucosamine 6-phosphate + (R)-lactate. It functions in the pathway amino-sugar metabolism; N-acetylmuramate degradation. Specifically catalyzes the cleavage of the D-lactyl ether substituent of MurNAc 6-phosphate, producing GlcNAc 6-phosphate and D-lactate. The sequence is that of N-acetylmuramic acid 6-phosphate etherase from Lactococcus lactis subsp. lactis (strain IL1403) (Streptococcus lactis).